The chain runs to 271 residues: Mannosyl-3-phosphoglycerate phosphatase (271 aa).

Residue aspartate 13 is the Nucleophile of the active site. Aspartate 13, aspartate 15, and aspartate 214 together coordinate Mg(2+).

Belongs to the HAD-like hydrolase superfamily. MPGP family. Mg(2+) serves as cofactor.

It is found in the cytoplasm. It carries out the reaction 2-O-(alpha-D-mannosyl)-3-phosphoglycerate + H2O = (2R)-2-O-(alpha-D-mannosyl)-glycerate + phosphate. The polypeptide is Mannosyl-3-phosphoglycerate phosphatase (yedP) (Shigella sonnei (strain Ss046)).